We begin with the raw amino-acid sequence, 378 residues long: Heme chaperone HemW (378 aa).

Positions 1-237 (MVKLPPLSLY…LTAAGYQQYE (237 aa)) constitute a Radical SAM core domain. Tyrosine 10 lines the S-adenosyl-L-methionine pocket. Residues cysteine 16, cysteine 20, and cysteine 23 each contribute to the [4Fe-4S] cluster site. S-adenosyl-L-methionine-binding positions include glycine 66, 67–68 (GT), glutamate 99, glutamine 126, arginine 138, and aspartate 163.

The protein belongs to the anaerobic coproporphyrinogen-III oxidase family. HemW subfamily. As to quaternary structure, binding of the [4Fe-4S] cofactor promotes dimerization. [4Fe-4S] cluster is required as a cofactor.

It is found in the cytoplasm. Probably acts as a heme chaperone, transferring heme to the NarI subunit of the respiratory enzyme nitrate reductase; transfer may be stimulated by NADH. Binds one molecule of heme per monomer, possibly covalently. Heme binding is not affected by either [4Fe-4S] or S-adenosyl-L-methionine (SAM)-binding. Does not have coproporphyrinogen III dehydrogenase activity in vitro. Binds 1 [4Fe-4S] cluster. The cluster is coordinated with 3 cysteines and an exchangeable S-adenosyl-L-methionine. In Escherichia coli (strain K12), this protein is Heme chaperone HemW.